An 89-amino-acid polypeptide reads, in one-letter code: Dynein light chain LC6, flagellar outer arm (89 aa).

It belongs to the dynein light chain family. Consists of at least 3 heavy chains (alpha, beta and gamma), 2 intermediate chains and 8 light chains.

It is found in the cytoplasm. Its subcellular location is the cytoskeleton. The protein localises to the flagellum axoneme. In Heliocidaris crassispina (Sea urchin), this protein is Dynein light chain LC6, flagellar outer arm.